The primary structure comprises 150 residues: 3-hydroxyacyl-[acyl-carrier-protein] dehydratase FabZ (150 aa).

The active site involves His-54.

It belongs to the thioester dehydratase family. FabZ subfamily.

The protein resides in the cytoplasm. The enzyme catalyses a (3R)-hydroxyacyl-[ACP] = a (2E)-enoyl-[ACP] + H2O. In terms of biological role, involved in unsaturated fatty acids biosynthesis. Catalyzes the dehydration of short chain beta-hydroxyacyl-ACPs and long chain saturated and unsaturated beta-hydroxyacyl-ACPs. This is 3-hydroxyacyl-[acyl-carrier-protein] dehydratase FabZ from Vibrio campbellii (strain ATCC BAA-1116).